Here is a 444-residue protein sequence, read N- to C-terminus: MKSQSKRTSRLFVFVGGVVAIIIAVLSWRYFGTGSDNNTSGAQQSARGQDTSHGGRRNTPLAPVQAATATEQEVPRYLTGLGTVIAANTVTVTSRVDGELMALHFTEGQQVKAGDLLAEIDPRPYEVQLTQAQGQLAKDQATLDNARRDLARYQKLSKTGLISQQELDTQSSLVRQSEGSVKADQGAIDSAKLQLTYSRITAPISGRVGLKQVDVGNYITSGTATPIVVITQTHPVDVVFTLPESDIPAIIQAQKNAEKTHAIVPVEAWDRTNKQMLAQGYLLSIDNQIDTTTGTIKLKARFNNEDDVLFPNQFVNARIKVDLLQNAVVVPTAAVQMGSEGNFVWTLDDANKVSKHLVTTGIQNSQQVVIDAGLNAGQRVVTDGIDRLTEGVQVEVVTPRSANTDANPASAEKAAAEAEGSTPHQGRGRPANAPARSTTAAEKS.

An N-terminal signal peptide occupies residues 1-20; sequence MKSQSKRTSRLFVFVGGVVA. Polar residues predominate over residues 37 to 52; that stretch reads NNTSGAQQSARGQDTS. 2 disordered regions span residues 37–60 and 398–444; these read NNTSGAQQSARGQDTSHGGRRNTP and TPRS…AEKS. Residues 406 to 419 show a composition bias toward low complexity; sequence ANPASAEKAAAEAE. Residues 435 to 444 are compositionally biased toward polar residues; the sequence is ARSTTAAEKS.

This sequence belongs to the membrane fusion protein (MFP) (TC 8.A.1) family. As to quaternary structure, part of a tripartite efflux system composed of MdtA, MdtB and MdtC.

It is found in the cell inner membrane. This Yersinia pseudotuberculosis serotype O:1b (strain IP 31758) protein is Multidrug resistance protein MdtA.